The following is a 141-amino-acid chain: Large ribosomal subunit protein uL11 (141 aa).

This sequence belongs to the universal ribosomal protein uL11 family. In terms of assembly, part of the ribosomal stalk of the 50S ribosomal subunit. Interacts with L10 and the large rRNA to form the base of the stalk. L10 forms an elongated spine to which L12 dimers bind in a sequential fashion forming a multimeric L10(L12)X complex. One or more lysine residues are methylated.

Forms part of the ribosomal stalk which helps the ribosome interact with GTP-bound translation factors. The polypeptide is Large ribosomal subunit protein uL11 (Herpetosiphon aurantiacus (strain ATCC 23779 / DSM 785 / 114-95)).